Reading from the N-terminus, the 2477-residue chain is Non-reducing polyketide synthase mapC (2477 aa).

Residues 14–269 form an N-terminal acylcarrier protein transacylase domain (SAT) region; sequence LLFGPQCSEI…HQQTHREGIQ (256 aa). In terms of domain architecture, Ketosynthase family 3 (KS3) spans 403–820; that stretch reads MPPIAITGMA…GSNAALIVRD (418 aa). Catalysis depends on for beta-ketoacyl synthase activity residues Cys-568, His-703, and His-742. The tract at residues 930 to 1233 is malonyl-CoA:ACP transacylase (MAT) domain; it reads LCFGGQNGVT…HRVNLDGSDG (304 aa). The For acyl/malonyl transferase activity role is filled by Ser-1017. The segment at 1302-1435 is N-terminal hotdog fold; sequence QERAGLLRKL…GSVSLCNERS (134 aa). Positions 1302–1612 constitute a PKS/mFAS DH domain; it reads QERAGLLRKL…FMSVSIRSLT (311 aa). Residues 1307-1611 form a product template (PT) domain region; sequence LLRKLSDGPE…RFMSVSIRSL (305 aa). The Proton acceptor; for dehydratase activity role is filled by His-1336. A C-terminal hotdog fold region spans residues 1461–1612; that stretch reads ASNGLKGSTV…FMSVSIRSLT (152 aa). Residue Asp-1518 is the Proton donor; for dehydratase activity of the active site. Residues 1651–1725 form the Carrier domain; sequence DSDLVAVQEM…GLTEHIFPGH (75 aa). At Ser-1685 the chain carries O-(pantetheine 4'-phosphoryl)serine. Residues 1882–2117 form a methyltransferase (CMeT) domain region; it reads PYALEHDLLQ…GFEWVGWTNN (236 aa). Catalysis depends on for thioesterase activity residues Ser-2267 and Asp-2421.

The protein localises to the cytoplasm. Its subcellular location is the cytosol. It carries out the reaction 3 malonyl-CoA + acetyl-CoA + S-adenosyl-L-methionine + H(+) = 5-methylorsellinate + S-adenosyl-L-homocysteine + 3 CO2 + 4 CoA. Its pathway is secondary metabolite biosynthesis; terpenoid biosynthesis. Its function is as follows. Non-reducing polyketide synthase; part of the gene cluster that mediates the biosynthesis of mycophenolic acid (MPA), the first isolated antibiotic natural product in the world obtained from a culture of Penicillium brevicompactum in 1893. MpaC catalyzes the synthesis of 5-methylorsellinic acid (5MOA) via the condensation of 1 acetyl-CoA starter unit with 3 malonyl-CoA units and one methylation step. The first step of the pathway is the synthesis of 5-methylorsellinic acid (5MOA) by the cytosolic polyketide synthase mpaC. 5MOA is then converted to the phthalide compound 5,7-dihydroxy-4,6-dimethylphthalide (DHMP) by the endoplasmic reticulum-bound cytochrome P450 monooxygenase mpaDE. MpaDE first catalyzes hydroxylation of 5-MOA to 4,6-dihydroxy-2-(hydroxymethyl)-3-methylbenzoic acid (DHMB). MpaDE then acts as a lactone synthase that catalyzes the ring closure to convert DHMB into DHMP. The next step is the prenylation of DHMP by the Golgi apparatus-associated prenyltransferase mpaA to yield farnesyl-DHMP (FDHMP). The ER-bound oxygenase mpaB then mediates the oxidative cleavage the C19-C20 double bond in FDHMP to yield FDHMP-3C via a mycophenolic aldehyde intermediate. The O-methyltransferase mpaG catalyzes the methylation of FDHMP-3C to yield MFDHMP-3C. After the cytosolic methylation of FDHMP-3C, MFDHMP-3C enters into peroxisomes probably via free diffusion due to its low molecular weight. Upon a peroxisomal CoA ligation reaction, catalyzed by a beta-oxidation component enzyme acyl-CoA ligase ACL891, MFDHMP-3C-CoA would then be restricted to peroxisomes for the following beta-oxidation pathway steps. The peroxisomal beta-oxidation machinery than converts MFDHMP-3C-CoA into MPA_CoA, via a beta-oxidation chain-shortening process. Finally mpaH acts as a peroxisomal acyl-CoA hydrolase with high substrate specificity toward MPA-CoA to release the final product MPA. This chain is Non-reducing polyketide synthase mapC, found in Penicillium roqueforti (strain FM164).